The chain runs to 164 residues: MTHDKNCPCGSQKSYQDCCQALHLGLDSGAQLATSPEQLMRSRYCAFVLKNFDYIIKTHHAAYLDGLTLEQLQQGPHPEWLGLDVLSANDTTQPDGSKFGTVTFKAWYKMNGEIDAIYERSEFIFEQGRWFYTKGHQMHAKLPGRNDPCVCHSGKKFKQCCMKG.

It belongs to the UPF0225 family.

This chain is UPF0225 protein Shewmr4_2054, found in Shewanella sp. (strain MR-4).